The following is an 87-amino-acid chain: Small ribosomal subunit protein bS20 (87 aa).

This sequence belongs to the bacterial ribosomal protein bS20 family.

Binds directly to 16S ribosomal RNA. The chain is Small ribosomal subunit protein bS20 from Neorickettsia sennetsu (strain ATCC VR-367 / Miyayama) (Ehrlichia sennetsu).